The following is a 1154-amino-acid chain: DNA-directed RNA polymerase subunit beta' (1154 aa).

Positions 60, 62, 75, and 78 each coordinate Zn(2+). The Mg(2+) site is built by Asp-449, Asp-451, and Asp-453. Zn(2+)-binding residues include Cys-774, Cys-848, Cys-855, and Cys-858.

Belongs to the RNA polymerase beta' chain family. The RNAP catalytic core consists of 2 alpha, 1 beta, 1 beta' and 1 omega subunit. When a sigma factor is associated with the core the holoenzyme is formed, which can initiate transcription. Mg(2+) is required as a cofactor. Requires Zn(2+) as cofactor.

It catalyses the reaction RNA(n) + a ribonucleoside 5'-triphosphate = RNA(n+1) + diphosphate. Functionally, DNA-dependent RNA polymerase catalyzes the transcription of DNA into RNA using the four ribonucleoside triphosphates as substrates. This Desulforudis audaxviator (strain MP104C) protein is DNA-directed RNA polymerase subunit beta'.